We begin with the raw amino-acid sequence, 107 residues long: Thioredoxin (107 aa).

The Thioredoxin domain occupies 2–107 (SVSQVTDASF…LASTLNKYIS (106 aa)). Active-site nucleophile residues include cysteine 31 and cysteine 34. Cysteines 31 and 34 form a disulfide.

Belongs to the thioredoxin family.

The protein localises to the plastid. The protein resides in the chloroplast. In terms of biological role, participates in various redox reactions through the reversible oxidation of its active center dithiol to a disulfide and catalyzes dithiol-disulfide exchange reactions. The sequence is that of Thioredoxin (trxA) from Pyropia yezoensis (Susabi-nori).